Reading from the N-terminus, the 313-residue chain is 3'-5' exoribonuclease YhaM (313 aa).

One can recognise an HD domain in the interval 163–279 (HVVSMLRLAK…LHQIDLMDAS (117 aa)).

Belongs to the YhaM family.

Shows a 3'-5' exoribonuclease activity. The chain is 3'-5' exoribonuclease YhaM from Listeria welshimeri serovar 6b (strain ATCC 35897 / DSM 20650 / CCUG 15529 / CIP 8149 / NCTC 11857 / SLCC 5334 / V8).